The following is a 1338-amino-acid chain: Nonribosomal peptide synthetase astA (1338 aa).

Residues 22 to 52 (IAVVSGDIPSPHPKNEPSQTSTLHIPRDSDL) form a disordered region. Positions 271–681 (FQARCRQNPS…GRKGAEVKLR (411 aa)) are adenylation. One can recognise a Carrier domain in the interval 820-893 (TPVEIIIHDA…SLAEKCSAGG (74 aa)). Residue Ser854 is modified to O-(pantetheine 4'-phosphoryl)serine. A condensation region spans residues 949 to 1336 (TFIFRLSGPV…IIRFLDSPDS (388 aa)).

The protein belongs to the NRP synthetase family.

It carries out the reaction 7beta,14,16-trihydroxyconfertifolin + benzoate + H(+) = dideacetyl astellolide A + H2O. It catalyses the reaction 7beta,14,16-trihydroxyconfertifolin + 4-hydroxybenzoate + H(+) = dideacetyl astellolide B + H2O. It participates in secondary metabolite biosynthesis; terpenoid biosynthesis. Nonribosomal peptide synthetase; part of the gene cluster that mediates the biosynthesis of astellolides, drimane-type sesquiterpene esters that show antimicrobial, anti-inflammatory, and anti-tumor activities. The first step in astellolide biosynthesis is performed by the sesquiterpene cyclase astC that catalyzes the formation of drimanyl pyrophosphate from farnesyl pyrophosphate. Drimanyl pyrophosphate is then dephosphorylated by the sesquiterpene phosphatase astI to produce drimanyl monophosphate which is further dephosphorylated to drim-8-ene-11-ol by atsK. Drim-8-ene-11-ol is converted to confertifolin, probably by the cytochrome P450 monooxygenase astD and/or the dehydrogenase astE. The cytochrome P450 monooxygenases astB, astF and astJ then hydroxylate confertifolin at C6, C14, or C15 to form trihydroxy confertifolin. The nonribosomal peptide synthetase astA catalyzes ester bond formation between trihydroxy contifolin and benzoic acid (BA) or 4-hydroxy benzoic acid (4HBA), leading to the formation of dideacetyl astellolides A and B, respectively. Finally, the O-acetyltransferase astG converts dideacetyl astellolides A and B into deacetyl astellolides A and B. The sequence is that of Nonribosomal peptide synthetase astA from Aspergillus oryzae (strain ATCC 42149 / RIB 40) (Yellow koji mold).